A 252-amino-acid polypeptide reads, in one-letter code: 5'-nucleotidase SurE (252 aa).

Residues Asp8, Asp9, Ser39, and Asn95 each contribute to the a divalent metal cation site.

This sequence belongs to the SurE nucleotidase family. It depends on a divalent metal cation as a cofactor.

The protein resides in the cytoplasm. The catalysed reaction is a ribonucleoside 5'-phosphate + H2O = a ribonucleoside + phosphate. Its function is as follows. Nucleotidase that shows phosphatase activity on nucleoside 5'-monophosphates. This chain is 5'-nucleotidase SurE, found in Clostridium botulinum (strain 657 / Type Ba4).